The chain runs to 446 residues: Phosphoglucosamine mutase (446 aa).

The Phosphoserine intermediate role is filled by Ser103. Mg(2+) is bound by residues Ser103, Asp242, Asp244, and Asp246. At Ser103 the chain carries Phosphoserine.

It belongs to the phosphohexose mutase family. The cofactor is Mg(2+). Post-translationally, activated by phosphorylation.

The catalysed reaction is alpha-D-glucosamine 1-phosphate = D-glucosamine 6-phosphate. Functionally, catalyzes the conversion of glucosamine-6-phosphate to glucosamine-1-phosphate. The sequence is that of Phosphoglucosamine mutase from Vibrio vulnificus (strain CMCP6).